A 35-amino-acid polypeptide reads, in one-letter code: Pheromone-binding protein (35 aa).

This sequence belongs to the PBP/GOBP family. In terms of tissue distribution, antenna.

Functionally, this major soluble protein in olfactory sensilla of male moths might serve to solubilize the extremely hydrophobic pheromone molecules and to transport pheromone through the aqueous lymph to receptors located on olfactory cilia. The chain is Pheromone-binding protein from Hyalophora cecropia (Cecropia moth).